The primary structure comprises 490 residues: ATP synthase subunit beta, chloroplastic (490 aa).

Residue 170-177 (GGAGVGKT) coordinates ATP.

Belongs to the ATPase alpha/beta chains family. As to quaternary structure, F-type ATPases have 2 components, CF(1) - the catalytic core - and CF(0) - the membrane proton channel. CF(1) has five subunits: alpha(3), beta(3), gamma(1), delta(1), epsilon(1). CF(0) has four main subunits: a(1), b(1), b'(1) and c(9-12).

Its subcellular location is the plastid. It localises to the chloroplast thylakoid membrane. It carries out the reaction ATP + H2O + 4 H(+)(in) = ADP + phosphate + 5 H(+)(out). Produces ATP from ADP in the presence of a proton gradient across the membrane. The catalytic sites are hosted primarily by the beta subunits. This Convolvulus arvensis (Field bindweed) protein is ATP synthase subunit beta, chloroplastic.